The following is a 251-amino-acid chain: Triosephosphate isomerase (251 aa).

Position 10–12 (10–12 (NWK)) interacts with substrate. The active-site Electrophile is H95. Catalysis depends on E167, which acts as the Proton acceptor. Substrate is bound by residues G173, S213, and 234 to 235 (GG).

It belongs to the triosephosphate isomerase family. Homodimer.

Its subcellular location is the cytoplasm. The enzyme catalyses D-glyceraldehyde 3-phosphate = dihydroxyacetone phosphate. The protein operates within carbohydrate biosynthesis; gluconeogenesis. It participates in carbohydrate degradation; glycolysis; D-glyceraldehyde 3-phosphate from glycerone phosphate: step 1/1. Involved in the gluconeogenesis. Catalyzes stereospecifically the conversion of dihydroxyacetone phosphate (DHAP) to D-glyceraldehyde-3-phosphate (G3P). The chain is Triosephosphate isomerase from Acetivibrio thermocellus (strain ATCC 27405 / DSM 1237 / JCM 9322 / NBRC 103400 / NCIMB 10682 / NRRL B-4536 / VPI 7372) (Clostridium thermocellum).